Reading from the N-terminus, the 347-residue chain is Ataxin-7-like protein 3 (347 aa).

The SGF11-type zinc-finger motif lies at 84–105 (CVCPNCSRSIAASRFAPHLEKC). Residues 116–125 (ANRRIANSNN) are compositionally biased toward low complexity. Positions 116 to 184 (ANRRIANSNN…GELSNSDPFK (69 aa)) are disordered. Phosphoserine is present on residues Ser129 and Ser131. Residues 132–141 (DQEDNDDIND) show a composition bias toward acidic residues. The 68-residue stretch at 196–263 (LGPEELRSLL…SLDNDSFDMT (68 aa)) folds into the SCA7 domain. Over residues 275 to 288 (DGSSDLSPSDSGSS) the composition is skewed to low complexity. Residues 275 to 347 (DGSSDLSPSD…PTPSIYDDIN (73 aa)) form a disordered region. Ser278, Ser281, and Ser326 each carry phosphoserine.

Belongs to the SGF11 family. Component of some SAGA transcription coactivator-HAT complexes, at least composed of ATXN7, ATXN7L3, ENY2, GCN5L2, SUPT3H, TAF10, TRRAP and USP22. Within the SAGA complex, ENY2, ATXN7, ATXN7L3, and USP22 form an additional subcomplex of SAGA called the DUB module (deubiquitination module). Interacts directly with ENY2 and USP22.

Its subcellular location is the nucleus. Component of the transcription regulatory histone acetylation (HAT) complex SAGA, a multiprotein complex that activates transcription by remodeling chromatin and mediating histone acetylation and deubiquitination. Within the SAGA complex, participates in a subcomplex that specifically deubiquitinates both histones H2A and H2B. The SAGA complex is recruited to specific gene promoters by activators such as MYC, where it is required for transcription. Required for nuclear receptor-mediated transactivation. Within the complex, it is required to recruit USP22 and ENY2 into the SAGA complex. Regulates H2B monoubiquitination (H2Bub1) levels. Affects subcellular distribution of ENY2, USP22 and ATXN7L3B. This chain is Ataxin-7-like protein 3, found in Homo sapiens (Human).